A 1468-amino-acid chain; its full sequence is Neuropathy target esterase sws (1468 aa).

At 1-34 (MDVLEMLRASASGSYNTIFSDAWCQYVSKQITAT) the chain is on the lumenal side. A helical transmembrane segment spans residues 35-55 (VYMYCALVMMSLLFIAWFLYF). At 56 to 1468 (KRMARLRLRD…RSSPNNETKN (1413 aa)) the chain is on the cytoplasmic side. Residue 174–301 (IFGHFEKPVF…IRVIQVIMIR (128 aa)) participates in a nucleoside 3',5'-cyclic phosphate binding. Composition is skewed to polar residues over residues 332–348 (TMSG…SRQA) and 357–366 (NQLNLMQSAA). Positions 332-411 (TMSGPINSQT…DGSFHGTTNL (80 aa)) are disordered. A phosphoserine mark is found at serine 442 and serine 451. Residues 480–607 (ELGL…VVRR) and 596–723 (IVLD…LSHR) contribute to the a nucleoside 3',5'-cyclic phosphate site. The PNPLA domain occupies 950-1116 (LVLGGGGARG…VNNLPGHLWR (167 aa)). The GXGXXG motif lies at 954-959 (GGGARG). A GXSXG motif is present at residues 981 to 985 (GVSIG). The active-site Nucleophile is the serine 983. The Proton acceptor role is filled by aspartate 1103. Positions 1103 to 1105 (DGG) match the DGA/G motif. At serine 1197 the chain carries Phosphoserine. The tract at residues 1368–1468 (ERKMDKSTQS…RSSPNNETKN (101 aa)) is disordered. The span at 1374-1383 (STQSSPPTSS) shows a compositional bias: low complexity. Residues 1385 to 1395 (TDMRGKEEAKH) show a composition bias toward basic and acidic residues. Over residues 1419 to 1441 (TQTGQEQELQQQQKLQQLQQDQG) the composition is skewed to low complexity. Over residues 1446–1459 (QLVDKDKEEDKENR) the composition is skewed to basic and acidic residues.

Belongs to the NTE family. Interacts with Pka-C3; interaction inhibits the catalytic function of Pka-C3 and the esterase activity of sws.

The protein resides in the endoplasmic reticulum membrane. The catalysed reaction is a 1-acyl-sn-glycero-3-phosphocholine + H2O = sn-glycerol 3-phosphocholine + a fatty acid + H(+). Functionally, phospholipase B that deacylates intracellular phosphatidylcholine (PtdCho), generating glycerophosphocholine (GroPtdCho). This deacylation occurs at both sn-2 and sn-1 positions of PtdCho. Its specific chemical modification by certain organophosphorus (OP) compounds leads to distal axonopathy. Plays a role in the signaling mechanism between neurons and glia that regulates glia wrapping during development of the adult brain. Essential for membrane lipid homeostasis and cell survival in both neurons and glia of the adult brain. This Drosophila sechellia (Fruit fly) protein is Neuropathy target esterase sws.